A 1355-amino-acid polypeptide reads, in one-letter code: Probable major glycoprotein (1355 aa).

An N-terminal signal peptide occupies residues 1-16 (MKKTMLAIILIPLVYA). Residues Asn81, Asn112, Asn129, Asn169, Asn173, Asn192, Asn542, Asn655, Asn682, Asn744, Asn780, Asn811, Asn815, Asn860, Asn865, Asn882, Asn895, Asn1213, Asn1225, Asn1267, and Asn1274 are each glycosylated (N-linked (GlcNAc...) asparagine; by host). Positions 1245–1299 (QIVSMEMEIQDLKLELIQLQKINTSVHMENITGDIDAMKATIEEYRAEMAKLRVT) form a coiled coil. The chain crosses the membrane as a helical span at residues 1308–1328 (FIYAILGVIAIGALIAIIFMA).

The protein localises to the host membrane. In Ictaluridae (bullhead catfishes), this protein is Probable major glycoprotein (ORF46).